Here is a 1038-residue protein sequence, read N- to C-terminus: Ribosome quality control complex subunit 2 (1038 aa).

The stretch at 350–383 (ALRIQNQESQAQKKIDDARAENDRKIQALLDVQE) forms a coiled coil. 3 disordered regions span residues 459–499 (LNTS…MKRK), 708–824 (KTSG…DEPG), and 877–898 (QRKKEEIMKREVREDRKNKREK). A coiled-coil region spans residues 713-768 (EDNGDDDEEEEEEEEEEEEEEEEEEEEEEEEKEEEEKEEEQQQDEDDSNEVNGLEK). Over residues 714 to 761 (DNGDDDEEEEEEEEEEEEEEEEEEEEEEEEKEEEEKEEEQQQDEDDSN) the composition is skewed to acidic residues. Residues 780–794 (SFEHDNLEKDIEKHC) show a composition bias toward basic and acidic residues. Over residues 795–805 (TISSDTDSDSG) the composition is skewed to polar residues. A Phosphoserine modification is found at S797. Residues 830-912 (IENINSNVRG…QALKFTKKEK (83 aa)) are a coiled coil. The segment covering 877 to 894 (QRKKEEIMKREVREDRKN) has biased composition (basic and acidic residues).

Belongs to the NEMF family. Component of the ribosome quality control complex (RQC), composed of the E3 ubiquitin ligase RKR1/LTN1, RQC1 and RQC2, as well as CDC48 and its ubiquitin-binding cofactors associated with the 60S ribosomal subunit. RQC2 binds to the 40S-binding surface of tRNAs.

It is found in the cytoplasm. Key component of the ribosome quality control complex (RQC), a ribosome-associated complex that mediates the extraction of incompletely synthesized nascent chains from stalled ribosomes as well as their ubiquitin-mediated proteasomal degradation. Thereby, frees 60S subunit ribosomes from the stalled translation complex and prevents the accumulation of nascent polypeptide chains that are potentially toxic for the cell. Within the RQC complex, RQC2 specifically binds stalled 60S ribosomal subunits by recognizing an exposed, nascent chain-conjugated tRNA moiety and promotes the recruitment of RKR1/LTN1 to stalled 60S subunits. Following binding to stalled 60S ribosomal subunits, RQC2 mediates CAT tailing by recruiting alanine- and threonine-charged tRNA to the A-site and directing the elongation of stalled nascent chains independently of mRNA or 40S subunits, leading to non-templated C-terminal Ala and Thr extensions (CAT tails). CAT tails promote the RKR1/LTN1-mediated ubiquitination of incompletely synthesized nascent polypeptides: CAT tailing facilitates RKR1/LTN1-dependent ubiquitination by exposing lysine residues that would otherwise remain buried in the ribosomal exit tunnel. Following ubiquitination, incompletely synthesized nascent polypeptides are recognized by CDC48 and degraded by the proteasome. CAT-tailed proteins tend to aggregate and sequester chaperones and can induce proteotoxic stress; their RKR1/LTN1-dependent ubiquitination and degradation is required to prevent proteotoxic stress. The protein is Ribosome quality control complex subunit 2 of Saccharomyces cerevisiae (strain ATCC 204508 / S288c) (Baker's yeast).